The primary structure comprises 398 residues: AT-rich interactive domain-containing protein 6 (398 aa).

A disordered region spans residues 25-87; that stretch reads EPLEPENDHN…PKTEGENAKK (63 aa). The region spanning 106 to 197 is the ARID domain; it reads PVEQVAFLRE…ALLEYEKCLR (92 aa). The segment at 213–236 is disordered; the sequence is SSVEKEPSSHQGSGSGRARRDSAA. The sHSP domain occupies 305–398; the sequence is VGPVADWVKI…RLFIRVPFEQ (94 aa).

It belongs to the small heat shock protein (HSP20) family.

It localises to the nucleus. The sequence is that of AT-rich interactive domain-containing protein 6 (ARID6) from Arabidopsis thaliana (Mouse-ear cress).